Reading from the N-terminus, the 82-residue chain is Sulfur carrier protein TusA (82 aa).

C19 serves as the catalytic Cysteine persulfide intermediate.

The protein belongs to the sulfur carrier protein TusA family.

The protein resides in the cytoplasm. Functionally, sulfur carrier protein which probably makes part of a sulfur-relay system. The chain is Sulfur carrier protein TusA from Photobacterium profundum (strain SS9).